We begin with the raw amino-acid sequence, 254 residues long: tRNA uridine(34) hydroxylase (254 aa).

In terms of domain architecture, Rhodanese spans 123-217; the sequence is QDPNVILLDT…YLESIPESES (95 aa). C177 serves as the catalytic Cysteine persulfide intermediate.

Belongs to the TrhO family.

The catalysed reaction is uridine(34) in tRNA + AH2 + O2 = 5-hydroxyuridine(34) in tRNA + A + H2O. Functionally, catalyzes oxygen-dependent 5-hydroxyuridine (ho5U) modification at position 34 in tRNAs. The polypeptide is tRNA uridine(34) hydroxylase (Legionella pneumophila (strain Corby)).